A 191-amino-acid polypeptide reads, in one-letter code: Large ribosomal subunit protein uL5 (191 aa).

It belongs to the universal ribosomal protein uL5 family. Part of the 50S ribosomal subunit; part of the 5S rRNA/L5/L18/L25 subcomplex. Contacts the 5S rRNA and the P site tRNA. Forms a bridge to the 30S subunit in the 70S ribosome.

Functionally, this is one of the proteins that bind and probably mediate the attachment of the 5S RNA into the large ribosomal subunit, where it forms part of the central protuberance. In the 70S ribosome it contacts protein S13 of the 30S subunit (bridge B1b), connecting the 2 subunits; this bridge is implicated in subunit movement. Contacts the P site tRNA; the 5S rRNA and some of its associated proteins might help stabilize positioning of ribosome-bound tRNAs. The protein is Large ribosomal subunit protein uL5 of Micrococcus luteus (Micrococcus lysodeikticus).